The sequence spans 496 residues: MIWWFIVGASFFFAFILIAKDTRTTKKNLPPGPPRLPIIGNLHQLGSKPQRSLFKLSEKYGSLMSLKFGNVSAVVASTPETVKDVLKTFDAECCSRPYMTYPARVTYNFNDLAFSPYSKYWREVRKMTVIELYTAKRVKSFQNVRQEEVASFVDFIKQHASLEKTVNMKQKLVKLSGSVICKVGFGISLEWSKLANTYEEVIQGTMEVVGRFAAADYFPIIGRIIDRITGLHSKCEKVFKEMDSFFDQSIKHHLEDTNIKDDIIGLLLKMEKGETGLGEFQLTRNHTKGILLNVLIAGVDTSGHTVTWVMTHLIKNPRVMKKAQAEVREVIKNKDDITEEDIERLEYLKMVIKETLRINPLVPLLIPREASKYIKIGGYDIPKKTWIYVNIWAVQRNPNVWKDPEVFIPERFMHSEIDYKGVDFELLPFGSGRRMCPGMGLGMALVHLTLINLLYRFDWKLPEGMNIEDVDLEESYGLVCPKKVPLQLIPVLTQWT.

Residues 1-21 (MIWWFIVGASFFFAFILIAKD) traverse the membrane as a helical segment. Cys-436 is a binding site for heme.

Belongs to the cytochrome P450 family. The cofactor is heme.

The protein resides in the membrane. The polypeptide is Cytochrome P450 71B14 (CYP71B14) (Arabidopsis thaliana (Mouse-ear cress)).